The chain runs to 278 residues: Large ribosomal subunit protein uL2 (278 aa).

2 stretches are compositionally biased toward basic residues: residues 210–219 (RKRWLGKRPQ) and 252–263 (KKSRGIKTRNSK). A disordered region spans residues 210-278 (RKRWLGKRPQ…LIIRHRKGNK (69 aa)).

It belongs to the universal ribosomal protein uL2 family. As to quaternary structure, part of the 50S ribosomal subunit. Forms a bridge to the 30S subunit in the 70S ribosome.

In terms of biological role, one of the primary rRNA binding proteins. Required for association of the 30S and 50S subunits to form the 70S ribosome, for tRNA binding and peptide bond formation. It has been suggested to have peptidyltransferase activity; this is somewhat controversial. Makes several contacts with the 16S rRNA in the 70S ribosome. The sequence is that of Large ribosomal subunit protein uL2 from Lactobacillus gasseri (strain ATCC 33323 / DSM 20243 / BCRC 14619 / CIP 102991 / JCM 1131 / KCTC 3163 / NCIMB 11718 / NCTC 13722 / AM63).